A 624-amino-acid chain; its full sequence is MRTFLSSFIILTTFLASLIAAETHTWYFKTGWVDANPDGVYPRKMIGFNDSWPLPTLRVKKGDRVQLYLINGFDNLNTTLHFHGLFVRGANQMDGPEMVTQCPIPPGETYLYNFTVTDQVGTYWYHSHTGGQYGDGMRGVFIIEDDDFPYHYDEEVVLTLSDHYHKYSGDIGPAFLTRFNPTGAEPIPQNFLFNETRNATWKVEPGKTYFVRILNVGGFVSQYLWMEDHEFTIVEIDGVYVEKNTTDLIYITVAQRYGVLITTKNSTDKNYVFMNGVDTTMLDSVPADLQVNGTNYIVYNESSALPDAYDIDSYDDALDDFYLKPLSKQKLMDDADYTITVDVQMNVLNDGINYAFFNNISYKAPKVPTLLTVLSAGEAATNELIYGTNTNSFVLQGGDIVDIVLNNFDTGKHPFHLHGHVFQLIERHEAIGSKESAVTFNVSDHAEWPEYPMIRDTVYVKPHSYMVLRFKADNPVVWFFHCHVDWHLEQGLAVVLIEDPQAIQKNEKITENHKRICEKVGVPWEGNAAANSNDYLDLKGENVQVKRLPTGFTTKGIVALVFSCVAAFLGLFSFSFYGMNDIAHVEDKVARDLDIDLEAENEDEEEAVVLNQNSSSSDSNSKPH.

The N-terminal stretch at 1–20 (MRTFLSSFIILTTFLASLIA) is a signal peptide. The Extracellular portion of the chain corresponds to 21-555 (AETHTWYFKT…KRLPTGFTTK (535 aa)). Plastocyanin-like domains follow at residues 46–144 (IGFN…FIIE) and 190–292 (NFLF…LQVN). Residues Asn-49 and Asn-77 are each glycosylated (N-linked (GlcNAc...) asparagine). Cu cation contacts are provided by His-81 and His-83. An N-linked (GlcNAc...) asparagine glycan is attached at Asn-113. Residues His-126 and His-128 each contribute to the Cu cation site. Asn-194, Asn-198, Asn-244, Asn-265, Asn-292, Asn-300, and Asn-359 each carry an N-linked (GlcNAc...) asparagine glycan. Positions 382 to 499 (NELIYGTNTN…QGLAVVLIED (118 aa)) constitute a Plastocyanin-like 3 domain. Residues His-413, His-416, and His-418 each coordinate Cu cation. Residue Asn-441 is glycosylated (N-linked (GlcNAc...) asparagine). The Cu cation site is built by His-481, Cys-482, His-483, and His-487. A helical membrane pass occupies residues 556 to 576 (GIVALVFSCVAAFLGLFSFSF). The Cytoplasmic portion of the chain corresponds to 577–624 (YGMNDIAHVEDKVARDLDIDLEAENEDEEEAVVLNQNSSSSDSNSKPH). A disordered region spans residues 603–624 (DEEEAVVLNQNSSSSDSNSKPH). Low complexity predominate over residues 608-624 (VVLNQNSSSSDSNSKPH).

The protein belongs to the multicopper oxidase family. It depends on Cu cation as a cofactor.

It localises to the cell membrane. Functionally, iron transport multicopper ferroxidase required for Fe(2+) high affinity uptake. Required to oxidize Fe(2+) and release it from the transporter. Essential component of copper-dependent iron transport. In Candida albicans (Yeast), this protein is Iron transport multicopper oxidase FET3 (FET3).